The primary structure comprises 468 residues: UDP-N-acetylmuramate--L-alanine ligase (468 aa).

122–128 contacts ATP; that stretch reads GSHGKTT.

The protein belongs to the MurCDEF family.

The protein localises to the cytoplasm. The catalysed reaction is UDP-N-acetyl-alpha-D-muramate + L-alanine + ATP = UDP-N-acetyl-alpha-D-muramoyl-L-alanine + ADP + phosphate + H(+). It functions in the pathway cell wall biogenesis; peptidoglycan biosynthesis. In terms of biological role, cell wall formation. This is UDP-N-acetylmuramate--L-alanine ligase from Synechococcus sp. (strain CC9902).